Here is a 443-residue protein sequence, read N- to C-terminus: Tubulin beta-2 chain (443 aa).

An MREI motif motif is present at residues 1 to 4; that stretch reads MREI. GTP contacts are provided by glutamine 11, glutamate 69, serine 138, glycine 142, threonine 143, glycine 144, asparagine 204, and asparagine 226. Glutamate 69 contributes to the Mg(2+) binding site. Glutamate 438 bears the 5-glutamyl polyglutamate mark.

The protein belongs to the tubulin family. In terms of assembly, dimer of alpha and beta chains. A typical microtubule is a hollow water-filled tube with an outer diameter of 25 nm and an inner diameter of 15 nM. Alpha-beta heterodimers associate head-to-tail to form protofilaments running lengthwise along the microtubule wall with the beta-tubulin subunit facing the microtubule plus end conferring a structural polarity. Microtubules usually have 13 protofilaments but different protofilament numbers can be found in some organisms and specialized cells. The cofactor is Mg(2+). Some glutamate residues at the C-terminus are polyglycylated, resulting in polyglycine chains on the gamma-carboxyl group. Glycylation is mainly limited to tubulin incorporated into axonemes (cilia and flagella) whereas glutamylation is prevalent in neuronal cells, centrioles, axonemes, and the mitotic spindle. Both modifications can coexist on the same protein on adjacent residues, and lowering polyglycylation levels increases polyglutamylation, and reciprocally. The precise function of polyglycylation is still unclear. In terms of processing, some glutamate residues at the C-terminus are polyglutamylated, resulting in polyglutamate chains on the gamma-carboxyl group. Polyglutamylation plays a key role in microtubule severing by spastin (SPAST). SPAST preferentially recognizes and acts on microtubules decorated with short polyglutamate tails: severing activity by SPAST increases as the number of glutamates per tubulin rises from one to eight, but decreases beyond this glutamylation threshold. In terms of tissue distribution, nervous system specific.

It localises to the cytoplasm. The protein resides in the cytoskeleton. Tubulin is the major constituent of microtubules, a cylinder consisting of laterally associated linear protofilaments composed of alpha- and beta-tubulin heterodimers. Microtubules grow by the addition of GTP-tubulin dimers to the microtubule end, where a stabilizing cap forms. Below the cap, tubulin dimers are in GDP-bound state, owing to GTPase activity of alpha-tubulin. The polypeptide is Tubulin beta-2 chain (tubb2) (Xenopus laevis (African clawed frog)).